The following is a 240-amino-acid chain: Probable Ni/Fe-hydrogenase B-type cytochrome subunit (240 aa).

4 helical membrane-spanning segments follow: residues 31-51, 75-95, 142-163, and 196-213; these read LWHW…YFIG, FAAG…AFVG, LAMF…FALY, and LGMW…YLAV.

This sequence belongs to the HupC/HyaC/HydC family.

The protein localises to the cell membrane. Functionally, probable b-type cytochrome. In Azotobacter vinelandii, this protein is Probable Ni/Fe-hydrogenase B-type cytochrome subunit (hoxZ).